We begin with the raw amino-acid sequence, 261 residues long: Lytic polysaccharide monooxygenase-like protein X325 (261 aa).

Residues 1 to 17 (MQLSALALATLLATANA) form the signal peptide. Residues histidine 18, histidine 64, and aspartate 133 each contribute to the Cu(2+) site. 2 disulfide bridges follow: cysteine 39/cysteine 139 and cysteine 108/cysteine 155. 2 N-linked (GlcNAc...) asparagine glycosylation sites follow: asparagine 157 and asparagine 183. The disordered stretch occupies residues 174–210 (LAENTQGSGNSSGHAHGSSGSGSASASKTDSKSSAAS). The span at 180–210 (GSGNSSGHAHGSSGSGSASASKTDSKSSAAS) shows a compositional bias: low complexity. Asparagine 238 is lipidated: GPI-anchor amidated asparagine. A propeptide spans 239-261 (SGSLAYVNGALAIGGVVAAALLI) (removed in mature form).

This sequence belongs to the X325 family. It depends on Cu(2+) as a cofactor.

It localises to the cell membrane. Functionally, lytic polysaccharide monooxygenase-like protein that has diverged to biological functions other than polysaccharide degradation since it does not perform oxidative cleavage of polysaccharides. Acts as a cell surface-bound protein that functions in the copper-accumulation pathway. This chain is Lytic polysaccharide monooxygenase-like protein X325, found in Yarrowia lipolytica (strain CLIB 122 / E 150) (Yeast).